The sequence spans 628 residues: Dihydroxy-acid dehydratase (628 aa).

Asp-80 contacts Mg(2+). Residue Cys-121 coordinates [2Fe-2S] cluster. Positions 122 and 123 each coordinate Mg(2+). Position 123 is an N6-carboxylysine (Lys-123). Cys-207 is a binding site for [2Fe-2S] cluster. A Mg(2+)-binding site is contributed by Glu-503. Ser-529 serves as the catalytic Proton acceptor.

It belongs to the IlvD/Edd family. Homodimer. It depends on [2Fe-2S] cluster as a cofactor. Mg(2+) serves as cofactor.

It carries out the reaction (2R)-2,3-dihydroxy-3-methylbutanoate = 3-methyl-2-oxobutanoate + H2O. The catalysed reaction is (2R,3R)-2,3-dihydroxy-3-methylpentanoate = (S)-3-methyl-2-oxopentanoate + H2O. It participates in amino-acid biosynthesis; L-isoleucine biosynthesis; L-isoleucine from 2-oxobutanoate: step 3/4. The protein operates within amino-acid biosynthesis; L-valine biosynthesis; L-valine from pyruvate: step 3/4. Functions in the biosynthesis of branched-chain amino acids. Catalyzes the dehydration of (2R,3R)-2,3-dihydroxy-3-methylpentanoate (2,3-dihydroxy-3-methylvalerate) into 2-oxo-3-methylpentanoate (2-oxo-3-methylvalerate) and of (2R)-2,3-dihydroxy-3-methylbutanoate (2,3-dihydroxyisovalerate) into 2-oxo-3-methylbutanoate (2-oxoisovalerate), the penultimate precursor to L-isoleucine and L-valine, respectively. The polypeptide is Dihydroxy-acid dehydratase (Psychrobacter arcticus (strain DSM 17307 / VKM B-2377 / 273-4)).